The following is a 647-amino-acid chain: Calmodulin-binding protein 60 B (647 aa).

Polar residues predominate over residues 1-10; sequence MMDSGNNNMN. Residues 1 to 26 are disordered; the sequence is MMDSGNNNMNRAKRNLDGNDDDQPER. Residues 8-85 are calmodulin-binding; the sequence is NMNRAKRNLD…TGSSGSSPKR (78 aa). A Nuclear localization signal motif is present at residues 12–19; sequence AKRNLDGN. Residues 155–278 are DNA-binding; that stretch reads EDDEDWTQEE…AFHKKLTAEG (124 aa).

It belongs to the plant ACBP60 protein family. In terms of assembly, interacts with calmodulin (CaM). Expressed in leaves, stems, flowers, developing seeds and root.

Its subcellular location is the nucleus. Functionally, transcription activator that binds DNA in a sequence-specific manner, likely 5'-GAAATTTTGG-3', to promote the expression of target genes. This chain is Calmodulin-binding protein 60 B, found in Arabidopsis thaliana (Mouse-ear cress).